The sequence spans 243 residues: Zwei Ig domain protein zig-6 (243 aa).

An N-terminal signal peptide occupies residues 1-20; the sequence is MTKLCLLLLPLVFLVSYSFA. Ig-like C2-type domains follow at residues 30-118 and 133-212; these read PNAN…MDVI and GQVL…KTVT. Cys47 and Cys102 are oxidised to a cystine. N-linked (GlcNAc...) asparagine glycosylation is found at Asn91 and Asn142. A disulfide bond links Cys145 and Cys196.

Expressed in head and tail body wall muscles.

It localises to the secreted. In terms of biological role, probably not involved in maintaining the position of ASI and ASH head neuron cell bodies and ventral nerve cord axons of PVQ, PVP, RMEV, AVK and HSN neurons. This Caenorhabditis elegans protein is Zwei Ig domain protein zig-6.